The sequence spans 434 residues: O-phosphoseryl-tRNA(Sec) selenium transferase (434 aa).

A tetramerization region spans residues 1 to 40 (MGLNITGLIPKHMENRGKLTLKENLKIIENILEQRKAPEN). Arg71 is a pyridoxal 5'-phosphate binding site. Residues 92–102 (GRSGNLIDPQP) are phosphate loop (P-loop). The substrate site is built by Arg93, Ser94, and Gln101. An N6-(pyridoxal phosphate)lysine modification is found at Lys277. Arg306 is a substrate binding site.

It belongs to the SepSecS family. In terms of assembly, homotetramer. Pyridoxal 5'-phosphate serves as cofactor.

The catalysed reaction is O-phospho-L-seryl-tRNA(Sec) + selenophosphate + H2O = L-selenocysteinyl-tRNA(Sec) + 2 phosphate. The protein operates within aminoacyl-tRNA biosynthesis; selenocysteinyl-tRNA(Sec) biosynthesis; selenocysteinyl-tRNA(Sec) from L-seryl-tRNA(Sec) (archaeal/eukaryal route): step 2/2. In terms of biological role, converts O-phosphoseryl-tRNA(Sec) to selenocysteinyl-tRNA(Sec) required for selenoprotein biosynthesis. In Methanocaldococcus jannaschii (strain ATCC 43067 / DSM 2661 / JAL-1 / JCM 10045 / NBRC 100440) (Methanococcus jannaschii), this protein is O-phosphoseryl-tRNA(Sec) selenium transferase (spcS).